We begin with the raw amino-acid sequence, 232 residues long: Lipoprotein-releasing system ATP-binding protein LolD 1 (232 aa).

The region spanning V11–L231 is the ABC transporter domain. A47–S54 contributes to the ATP binding site.

The protein belongs to the ABC transporter superfamily. Lipoprotein translocase (TC 3.A.1.125) family. The complex is composed of two ATP-binding proteins (LolD) and two transmembrane proteins (LolC and LolE).

The protein resides in the cell inner membrane. In terms of biological role, part of the ABC transporter complex LolCDE involved in the translocation of mature outer membrane-directed lipoproteins, from the inner membrane to the periplasmic chaperone, LolA. Responsible for the formation of the LolA-lipoprotein complex in an ATP-dependent manner. The sequence is that of Lipoprotein-releasing system ATP-binding protein LolD 1 from Rhodopseudomonas palustris (strain BisB18).